We begin with the raw amino-acid sequence, 1121 residues long: Putative ATP-dependent RNA helicase ECM32 (1121 aa).

Positions 157–187 are disordered; the sequence is NSTRKPRKKGGRRVGRGKKGRKGAKIKKEKK. The span at 160 to 184 shows a compositional bias: basic residues; it reads RKPRKKGGRRVGRGKKGRKGAKIKK. Serine 227 is subject to Phosphoserine. A disordered region spans residues 233–452; it reads AKVSKSETSR…NQEKNNGKTK (220 aa). The segment covering 251 to 263 has biased composition (basic residues); sequence NKGKGNKANHKKN. Polar residues predominate over residues 278-287; that stretch reads IRNNVRNSQP. The span at 307–316 shows a compositional bias: basic and acidic residues; it reads GKNESVDKHQ. A compositionally biased stretch (low complexity) spans 323–336; sequence LNGNGSGSTNTTGL. The segment covering 342–363 has biased composition (basic and acidic residues); sequence DHAGQKTKGNDKTGNKNPREAK. Over residues 376-413 the composition is skewed to polar residues; it reads KSNNQPNKGTSRWTIGSDTESSREPSISPNENTTSITK. Residue serine 392 is modified to Phosphoserine. Positions 426–452 are enriched in basic and acidic residues; the sequence is LNEKSKTTTMPKKLETKNQEKNNGKTK. Phosphothreonine is present on threonine 465. 670 to 677 is an ATP binding site; that stretch reads GPPGTGKT.

The protein belongs to the DNA2/NAM7 helicase family. As to quaternary structure, interacts with the peptidyl release factors SUP35 and weakly with SUP45.

It is found in the cytoplasm. It carries out the reaction ATP + H2O = ADP + phosphate + H(+). Probable RNA helicase, which may be involved in modulation of the translation termination process. Probably unwinds double-stranded RNA. In vitro, unwinds covalently closed, circular DNA in the presence of a DNA topoisomerase TOP1 and replication factor-A protein RFA1. This is Putative ATP-dependent RNA helicase ECM32 (ECM32) from Saccharomyces cerevisiae (strain ATCC 204508 / S288c) (Baker's yeast).